Reading from the N-terminus, the 139-residue chain is Large ribosomal subunit protein uL22 (139 aa).

The segment at 1 to 21 (MTAPEQTYRNKKQRKQQHKLR) is disordered. The segment covering 9-21 (RNKKQRKQQHKLR) has biased composition (basic residues).

Belongs to the universal ribosomal protein uL22 family. As to quaternary structure, part of the 50S ribosomal subunit.

Its function is as follows. This protein binds specifically to 23S rRNA; its binding is stimulated by other ribosomal proteins, e.g. L4, L17, and L20. It is important during the early stages of 50S assembly. It makes multiple contacts with different domains of the 23S rRNA in the assembled 50S subunit and ribosome. Functionally, the globular domain of the protein is located near the polypeptide exit tunnel on the outside of the subunit, while an extended beta-hairpin is found that lines the wall of the exit tunnel in the center of the 70S ribosome. This Deinococcus geothermalis (strain DSM 11300 / CIP 105573 / AG-3a) protein is Large ribosomal subunit protein uL22.